Consider the following 558-residue polypeptide: 2-isopropylmalate synthase (558 aa).

The 274-residue stretch at 30-303 (PIWCSVDLRD…DPELDCRDIE (274 aa)) folds into the Pyruvate carboxyltransferase domain. Mg(2+)-binding residues include Asp39, His242, His244, and Asn278. Residues 437–558 (QPNARIKFVD…ANRVLEERAK (122 aa)) form a regulatory domain region.

This sequence belongs to the alpha-IPM synthase/homocitrate synthase family. LeuA type 2 subfamily. In terms of assembly, homodimer. Mg(2+) is required as a cofactor.

The protein resides in the cytoplasm. The enzyme catalyses 3-methyl-2-oxobutanoate + acetyl-CoA + H2O = (2S)-2-isopropylmalate + CoA + H(+). Its pathway is amino-acid biosynthesis; L-leucine biosynthesis; L-leucine from 3-methyl-2-oxobutanoate: step 1/4. Functionally, catalyzes the condensation of the acetyl group of acetyl-CoA with 3-methyl-2-oxobutanoate (2-ketoisovalerate) to form 3-carboxy-3-hydroxy-4-methylpentanoate (2-isopropylmalate). The polypeptide is 2-isopropylmalate synthase (Agrobacterium fabrum (strain C58 / ATCC 33970) (Agrobacterium tumefaciens (strain C58))).